A 362-amino-acid chain; its full sequence is L-asparaginase 2-1 (362 aa).

The signal sequence occupies residues 1-25 (MRSLNTLLLSLFVAMSSGAPLLKIR). Asn29 carries an N-linked (GlcNAc...) asparagine glycan. The Asparaginase/glutaminase domain maps to 33 to 359 (PSIKIFGTGG…DQIRSVFSGV (327 aa)). Catalysis depends on Thr43, which acts as the O-isoaspartyl threonine intermediate. Ser89 serves as a coordination point for substrate. N-linked (GlcNAc...) asparagine glycosylation is present at Asn93. 122-123 (TD) provides a ligand contact to substrate. N-linked (GlcNAc...) asparagine glycosylation is present at Asn239.

It belongs to the asparaginase 1 family.

Its subcellular location is the secreted. It is found in the periplasm. The catalysed reaction is L-asparagine + H2O = L-aspartate + NH4(+). The chain is L-asparaginase 2-1 (ASP3-1) from Saccharomyces cerevisiae (strain ATCC 204508 / S288c) (Baker's yeast).